Here is a 2851-residue protein sequence, read N- to C-terminus: Highly reducing polyketide synthase sthA (2851 aa).

The Ketosynthase family 3 (KS3) domain maps to 8–415 (NEPIVIIGSG…GTNAHAIVEG (408 aa)). Residues 304–324 (LDPESPNDRPQYIESHGTGTP) form a disordered region. An acyl transferase (AT) domain region spans residues 529 to 851 (IFTGQGAQYA…PYHGSLVRGE (323 aa)). The tract at residues 926 to 1059 (HQLLGNVSPD…GELNILLVDD (134 aa)) is N-terminal hotdog fold. The region spanning 926-1235 (HQLLGNVSPD…FKPVGSDAKD (310 aa)) is the PKS/mFAS DH domain. Residues 949 to 1242 (PKEMTWLEGH…AKDDRNVFYK (294 aa)) are dehydratase (DH) domain. H958 (proton acceptor; for dehydratase activity) is an active-site residue. The C-terminal hotdog fold stretch occupies residues 1076–1235 (MIPVQPSRLY…FKPVGSDAKD (160 aa)). D1137 functions as the Proton donor; for dehydratase activity in the catalytic mechanism. The segment at 1390-1577 (QCTLWVAGVL…GIDTMSPPEL (188 aa)) is methyltransferase (MT) domain. A ketoreductase (KR)domain region spans residues 2079-2252 (TYWLVGLSGA…RSSVVNVGAI (174 aa)). Residues 2360-2443 (ADITKVVQQA…DLAAESIPAE (84 aa)) form the Carrier domain. At S2399 the chain carries O-(pantetheine 4'-phosphoryl)serine. The interval 2447–2496 (HVQQQQQQAGRQDASSNTSSDDETASTLPTSPESASPGTSTPVPEKDISP) is disordered. The span at 2455-2488 (AGRQDASSNTSSDDETASTLPTSPESASPGTSTP) shows a compositional bias: polar residues. The segment at 2535-2767 (LTGCSGLLGH…DLVSVDTCCS (233 aa)) is reductase (R) domain.

It depends on pantetheine 4'-phosphate as a cofactor.

The catalysed reaction is 7 malonyl-CoA + acetyl-CoA + 10 AH2 + 5 S-adenosyl-L-methionine + 2 H(+) = dehydroprobetaenone I + 10 A + 5 S-adenosyl-L-homocysteine + 7 CO2 + 8 CoA + 6 H2O. It participates in mycotoxin biosynthesis. Its function is as follows. Highly reducing polyketide synthase; part of the gene cluster that mediates the biosynthesis of the phytotoxin stemphyloxin II. The first step of the pathway is the synthesis of dehydroprobetaenone I by the polyketide synthase sthA and the enoyl reductase sthE via condensation of one acetyl-CoA starter unit with 7 malonyl-CoA units and 5 methylations. The C-terminal reductase (R) domain of sthA catalyzes the reductive release of the polyketide chain. Because sthA lacks a designated enoylreductase (ER) domain, the required activity is provided the enoyl reductase sthE. The short-chain dehydrogenase/reductase sthC then catalyzes reduction of dehydroprobetaenone I to probetaenone I. The cytochrome P450 monooxygenase sthF catalyzes successive epoxidation, oxidation (resulting from epoxide opening) and hydroxylation to install a tertiary alcohol in the decaline ring to yield betaenone C from dehydroprobetaenone I and betaenone B from probetaenone I. The FAD-linked oxidoreductase sthB is responsible for the conversion of betaenone C to betaenone A via an intramolecular aldol reaction between C-1 and C-17 to form the bridged tricyclic system in betaenone A. Finally, the cytochrome P450 monooxygenase sthD catalyzes the hydroxylation of C-15 to afford the final metabolite stemphyloxin II. In Phaeosphaeria nodorum (strain SN15 / ATCC MYA-4574 / FGSC 10173) (Glume blotch fungus), this protein is Highly reducing polyketide synthase sthA.